Here is a 173-residue protein sequence, read N- to C-terminus: T-cell receptor beta-2 chain C region (173 aa).

Residues 1–146 form a c region region; the sequence is EDLRNVTPPK…GVLSATILYE (146 aa). Residues N67 and N116 are each glycosylated (N-linked (GlcNAc...) asparagine). A helical membrane pass occupies residues 147-168; that stretch reads ILLGKATLYAVLVSGLVLMAMV. Over 169–173 the chain is Cytoplasmic; that stretch reads KKKNS.

The protein resides in the membrane. The polypeptide is T-cell receptor beta-2 chain C region (Mus musculus (Mouse)).